We begin with the raw amino-acid sequence, 807 residues long: Poly-beta-1,6-N-acetyl-D-glucosamine export protein (807 aa).

The N-terminal stretch at 1–26 (MYSSSRKRCPKTKWALKLLTAAFLAA) is a signal peptide. TPR repeat units lie at residues 98-131 (ARGY…EPQN), 165-198 (KANL…NAST), and 279-311 (RIQV…GQII).

It is found in the cell outer membrane. Functionally, exports the biofilm adhesin polysaccharide poly-beta-1,6-N-acetyl-D-glucosamine (PGA) across the outer membrane. The PGA transported seems to be partially N-deacetylated since N-deacetylation of PGA by PgaB is needed for PGA export through the PgaA porin. The protein is Poly-beta-1,6-N-acetyl-D-glucosamine export protein (pgaA) of Escherichia coli O157:H7.